Reading from the N-terminus, the 131-residue chain is MSIVLRKSNKKNKNCITSKFYTIHIIKISTPVFRAPIAIGESPYVEWSCLQVVFRKDMVTKKTTFAQLITRLNHFLCQALKRRDSKTYILCRTAVFGAMTPFSPRKSHINNKLPMQPRKKKIVIIYVVRFH.

This Saccharomyces cerevisiae (strain ATCC 204508 / S288c) (Baker's yeast) protein is Bypass of stop codon protein 4 (BSC4).